A 451-amino-acid chain; its full sequence is tRNA modification GTPase MnmE (451 aa).

(6S)-5-formyl-5,6,7,8-tetrahydrofolate contacts are provided by Arg-25, Glu-87, and Arg-127. Positions 222–374 constitute a TrmE-type G domain; it reads GLRVALVGRP…FVQVLLERCG (153 aa). A K(+)-binding site is contributed by Asn-232. Residues 232–237, 251–257, and 276–279 each bind GTP; these read NVGKSS, TELPGTT, and DTAG. Ser-236 is a Mg(2+) binding site. Residues Thr-251, Leu-253, and Thr-256 each contribute to the K(+) site. Thr-257 is a Mg(2+) binding site. A (6S)-5-formyl-5,6,7,8-tetrahydrofolate-binding site is contributed by Lys-451.

The protein belongs to the TRAFAC class TrmE-Era-EngA-EngB-Septin-like GTPase superfamily. TrmE GTPase family. Homodimer. Heterotetramer of two MnmE and two MnmG subunits. Requires K(+) as cofactor.

The protein resides in the cytoplasm. Exhibits a very high intrinsic GTPase hydrolysis rate. Involved in the addition of a carboxymethylaminomethyl (cmnm) group at the wobble position (U34) of certain tRNAs, forming tRNA-cmnm(5)s(2)U34. This chain is tRNA modification GTPase MnmE, found in Synechococcus sp. (strain CC9902).